Here is an 868-residue protein sequence, read N- to C-terminus: Cytosolic phospholipase A2 epsilon (868 aa).

Residues 1–46 (MSLQASEGCPGLGTNVFVPQSPQTDEEGSRSGRSFSEFEDTQDLDT) are disordered. The 125-residue stretch at 46 to 170 (TPGLPPFCPM…CFRKKTHVKF (125 aa)) folds into the C2 domain. Ca(2+)-binding residues include D84, D90, D140, D142, and D148. The region spanning 324 to 856 (PCPETLDVRL…TLLQALRLAV (533 aa)) is the PLA2c domain. The active-site Nucleophile is the S412. The Proton acceptor role is filled by D700. S800 is modified (phosphoserine). The interval 857-868 (EKKKRLKGQCPS) is required for localization at membrane structures.

It depends on Ca(2+) as a cofactor.

Its subcellular location is the cytoplasm. The protein resides in the cytosol. The protein localises to the early endosome membrane. It localises to the lysosome membrane. It is found in the cell membrane. The enzyme catalyses a 1,2-diacyl-sn-glycero-3-phosphoethanolamine + a 1,2-diacyl-sn-glycero-3-phosphocholine = an N-acyl-1,2-diacyl-sn-glycero-3-phosphoethanolamine + a 2-acyl-sn-glycero-3-phosphocholine + H(+). The catalysed reaction is 1-hexadecanoyl-2-octadecanoyl-sn-glycero-3-phosphocholine + 1,2-di-(9Z-octadecenoyl)-sn-glycero-3-phosphoethanolamine = 2-octadecanoyl-sn-glycero-3-phosphocholine + N-hexadecanoyl-1,2-di-(9Z-octadecenoyl)-sn-glycero-3-phosphoethanolamine + H(+). It catalyses the reaction 1-octadecanoyl-2-hexadecanoyl-sn-glycero-3-phosphocholine + 1,2-di-(9Z-octadecenoyl)-sn-glycero-3-phosphoethanolamine = N-octadecanoyl-1,2-di-(9Z-octadecenoyl)-sn-glycero-3-phosphoethanolamine + 2-hexadecanoyl-sn-glycero-3-phosphocholine + H(+). It carries out the reaction 1,2-di-(9Z-octadecenoyl)-sn-glycero-3-phosphoethanolamine + 1,2-dihexadecanoyl-sn-glycero-3-phosphocholine = N-hexadecanoyl-1,2-di-(9Z-octadecenoyl)-sn-glycero-3-phosphoethanolamine + 2-hexadecanoyl-sn-glycero-3-phosphocholine + H(+). The enzyme catalyses 1,2-di-(5Z,8Z,11Z,14Z-eicosatetraenoyl)-sn-glycero-3-phosphocholine + 1,2-di-(9Z-octadecenoyl)-sn-glycero-3-phosphoethanolamine = N-(5Z,8Z,11Z,14Z-eicosatetraenoyl)-1,2-di-(9Z-octadecenoyl)-sn-glycero-3-phosphoethanolamine + 2-(5Z,8Z,11Z,14Z)-eicosatetraenoyl-sn-glycero-3-phosphocholine + H(+). The catalysed reaction is 2 1,2-di-(9Z-octadecenoyl)-sn-glycero-3-phosphoethanolamine = N,1,2-tri-(9Z-octadecenoyl)-sn-glycero-3-phosphoethanolamine + 2-(9Z-octadecenoyl)-sn-glycero-3-phosphoethanolamine + H(+). It catalyses the reaction 1-(1Z-octadecenyl)-2-(9Z-octadecenoyl)-sn-glycero-3-phosphoethanolamine + 1,2-dihexadecanoyl-sn-glycero-3-phosphocholine = 1-O-(1Z-octadecenoyl)-2-(9Z-octadecenoyl)-sn-glycero-3-phospho-N-hexadecanoyl-ethanolamine + 2-hexadecanoyl-sn-glycero-3-phosphocholine + H(+). It carries out the reaction a 1,2-diacyl-sn-glycero-3-phosphocholine + H2O = a 1-acyl-sn-glycero-3-phosphocholine + a fatty acid + H(+). The enzyme catalyses 1-hexadecanoyl-2-(5Z,8Z,11Z,14Z-eicosatetraenoyl)-sn-glycero-3-phosphocholine + H2O = 1-hexadecanoyl-sn-glycero-3-phosphocholine + (5Z,8Z,11Z,14Z)-eicosatetraenoate + H(+). The catalysed reaction is 1-hexadecanoyl-sn-glycero-3-phosphocholine + H2O = sn-glycerol 3-phosphocholine + hexadecanoate + H(+). Its activity is regulated as follows. Stimulated by cytosolic Ca(2+). Stimulated by anionic phospholipids such as phosphatidylserines, phosphatidates and phosphatidylinositols. Calcium-dependent N-acyltransferase involved in the biosynthesis of N-acyl ethanolamines (NAEs) in the brain. Transfers the sn-1 fatty acyl chain of phosphatidylcholine (fatty acyl donor) to the amine group of phosphatidylethanolamine (fatty acyl acceptor) to generate N-acyl phosphatidylethanolamine (NAPE). Similarly can use plasmenylethanolamine as a fatty acyl acceptor to form N-acyl plasmenylethanolamine (N-Acyl-PlsEt). Both NAPE and N-Acyl-PlsEt can serve as precursors of bioactive NAEs like N-arachidonoyl phosphatidylethanolamine also called anandamide. Has weak phospholipase A2 and lysophospholipase activities. Regulates intracellular membrane trafficking that requires modulation of membrane curvature as it occurs by enrichment in lysophospholipids. Promotes tubule formation involved in clathrin-independent endocytotic trafficking and cargo recycling. This Homo sapiens (Human) protein is Cytosolic phospholipase A2 epsilon.